A 107-amino-acid chain; its full sequence is Thiosulfate sulfurtransferase GlpE (107 aa).

Residues Ala17 to Ser105 enclose the Rhodanese domain. The active-site Cysteine persulfide intermediate is Cys65.

The protein belongs to the GlpE family.

The protein resides in the cytoplasm. The catalysed reaction is thiosulfate + hydrogen cyanide = thiocyanate + sulfite + 2 H(+). The enzyme catalyses thiosulfate + [thioredoxin]-dithiol = [thioredoxin]-disulfide + hydrogen sulfide + sulfite + 2 H(+). Its function is as follows. Transferase that catalyzes the transfer of sulfur from thiosulfate to thiophilic acceptors such as cyanide or dithiols. May function in a CysM-independent thiosulfate assimilation pathway by catalyzing the conversion of thiosulfate to sulfite, which can then be used for L-cysteine biosynthesis. This chain is Thiosulfate sulfurtransferase GlpE, found in Erwinia tasmaniensis (strain DSM 17950 / CFBP 7177 / CIP 109463 / NCPPB 4357 / Et1/99).